A 112-amino-acid chain; its full sequence is Small ribosomal subunit protein uS17 (112 aa).

Belongs to the universal ribosomal protein uS17 family. As to quaternary structure, part of the 30S ribosomal subunit.

One of the primary rRNA binding proteins, it binds specifically to the 5'-end of 16S ribosomal RNA. The polypeptide is Small ribosomal subunit protein uS17 (Haloarcula marismortui (strain ATCC 43049 / DSM 3752 / JCM 8966 / VKM B-1809) (Halobacterium marismortui)).